We begin with the raw amino-acid sequence, 311 residues long: Apolipoprotein E (311 aa).

The N-terminal stretch at 1–18 (MKVWWAVLAAAILAGCRA) is a signal peptide. 8 consecutive repeat copies span residues 74–95 (MLME…EQLS), 96–116 (PMAQ…GALE), 117–138 (ADME…AMLG), 139–160 (QSTE…KRLL), 161–182 (RDAE…EGAE), 183–204 (RGVS…LRVA), 205–226 (TVGT…ERLR), and 227–248 (GHLE…EQVE). The tract at residues 74-248 (MLMEETMKEV…RLNEVREQVE (175 aa)) is 8 X 22 AA approximate tandem repeats. Met-136 is modified (methionine sulfoxide). Phosphoserine is present on Ser-140. Residues 151–161 (HLRKLRKRLLR) form an LDL and other lipoprotein receptors binding region. Residue 155-158 (LRKR) participates in heparin binding. Residues 203-283 (VATVGTLAGR…SWFEPLVEDM (81 aa)) are lipid-binding and lipoprotein association. O-linked (GalNAc...) threonine glycosylation occurs at Thr-205. 222 to 229 (GERLRGHL) contacts heparin. The tract at residues 259 to 311 (PQMRLQAEAFQARLKSWFEPLVEDMQRQWAGLVEKLQAAMPSKAPAAAPIENQ) is homooligomerization. The specificity for association with VLDL stretch occupies residues 271–283 (RLKSWFEPLVEDM).

This sequence belongs to the apolipoprotein A1/A4/E family. In terms of assembly, homotetramer. May interact with ABCA1; functionally associated with ABCA1 in the biogenesis of HDLs. May interact with APP/A4 amyloid-beta peptide; the interaction is extremely stable in vitro but its physiological significance is unclear. May interact with MAPT. May interact with MAP2. In the cerebrospinal fluid, interacts with secreted SORL1. Interacts with PMEL; this allows the loading of PMEL luminal fragment on ILVs to induce fibril nucleation. Post-translationally, APOE exists as multiple glycosylated and sialylated glycoforms within cells and in plasma. The extent of glycosylation and sialylation are tissue and context specific. Glycated in plasma VLDL. In terms of processing, phosphorylated by FAM20C in the extracellular medium.

It is found in the secreted. Its subcellular location is the extracellular space. The protein localises to the extracellular matrix. The protein resides in the extracellular vesicle. It localises to the endosome. It is found in the multivesicular body. Functionally, APOE is an apolipoprotein, a protein associating with lipid particles, that mainly functions in lipoprotein-mediated lipid transport between organs via the plasma and interstitial fluids. APOE is a core component of plasma lipoproteins and is involved in their production, conversion and clearance. Apolipoproteins are amphipathic molecules that interact both with lipids of the lipoprotein particle core and the aqueous environment of the plasma. As such, APOE associates with chylomicrons, chylomicron remnants, very low density lipoproteins (VLDL) and intermediate density lipoproteins (IDL) but shows a preferential binding to high-density lipoproteins (HDL). It also binds a wide range of cellular receptors including the LDL receptor/LDLR and the very low-density lipoprotein receptor/VLDLR that mediate the cellular uptake of the APOE-containing lipoprotein particles. Finally, APOE also has a heparin-binding activity and binds heparan-sulfate proteoglycans on the surface of cells, a property that supports the capture and the receptor-mediated uptake of APOE-containing lipoproteins by cells. The chain is Apolipoprotein E (APOE) from Oryctolagus cuniculus (Rabbit).